The primary structure comprises 30 residues: Cycloviolin-D (30 aa).

Positions 1–30 (GFPCGESCVFIPCISAAIGCSCKNKVCYRN) form a cross-link, cyclopeptide (Gly-Asn). Cystine bridges form between cysteine 4/cysteine 20, cysteine 8/cysteine 22, and cysteine 13/cysteine 27.

In terms of processing, this is a cyclic peptide.

In terms of biological role, probably participates in a plant defense mechanism. Has anti-HIV activity. This is Cycloviolin-D from Leonia cymosa (Sacha uba).